Reading from the N-terminus, the 227-residue chain is NAD(P)H-quinone oxidoreductase subunit K, chloroplastic (227 aa).

[4Fe-4S] cluster-binding residues include cysteine 43, cysteine 44, cysteine 108, and cysteine 139. Over residues 173-192 the composition is skewed to polar residues; it reads RSFTTNHKFQVGRSSHTGNY. Residues 173–201 form a disordered region; the sequence is RSFTTNHKFQVGRSSHTGNYDQGFLSKPP.

This sequence belongs to the complex I 20 kDa subunit family. As to quaternary structure, NDH is composed of at least 16 different subunits, 5 of which are encoded in the nucleus. [4Fe-4S] cluster is required as a cofactor.

The protein resides in the plastid. It is found in the chloroplast thylakoid membrane. It catalyses the reaction a plastoquinone + NADH + (n+1) H(+)(in) = a plastoquinol + NAD(+) + n H(+)(out). The catalysed reaction is a plastoquinone + NADPH + (n+1) H(+)(in) = a plastoquinol + NADP(+) + n H(+)(out). Functionally, NDH shuttles electrons from NAD(P)H:plastoquinone, via FMN and iron-sulfur (Fe-S) centers, to quinones in the photosynthetic chain and possibly in a chloroplast respiratory chain. The immediate electron acceptor for the enzyme in this species is believed to be plastoquinone. Couples the redox reaction to proton translocation, and thus conserves the redox energy in a proton gradient. The polypeptide is NAD(P)H-quinone oxidoreductase subunit K, chloroplastic (Trachelium caeruleum (Blue throatwort)).